We begin with the raw amino-acid sequence, 290 residues long: uncharacterized protein (290 aa).

Disordered regions lie at residues 1–98 (MLGQ…SRRV) and 209–236 (LSGQRGAGPGNSAYTPRRSQGGPRAATT). Over residues 63–76 (KPDRVRPGQRDRIG) the composition is skewed to basic and acidic residues. Over residues 87–97 (AGQARAASSRR) the composition is skewed to low complexity. The chain crosses the membrane as a helical span at residues 261–281 (CILTALLAVSFHSIGVVIMTS).

It is found in the membrane. This is an uncharacterized protein from Homo sapiens (Human).